The primary structure comprises 1415 residues: DNA-directed RNA polymerase subunit beta' (1415 aa).

Residues Cys70, Cys72, Cys85, and Cys88 each coordinate Zn(2+). Mg(2+) is bound by residues Asp461, Asp463, and Asp465. 4 residues coordinate Zn(2+): Cys820, Cys894, Cys901, and Cys904.

Belongs to the RNA polymerase beta' chain family. As to quaternary structure, the RNAP catalytic core consists of 2 alpha, 1 beta, 1 beta' and 1 omega subunit. When a sigma factor is associated with the core the holoenzyme is formed, which can initiate transcription. Mg(2+) serves as cofactor. Zn(2+) is required as a cofactor.

It catalyses the reaction RNA(n) + a ribonucleoside 5'-triphosphate = RNA(n+1) + diphosphate. Functionally, DNA-dependent RNA polymerase catalyzes the transcription of DNA into RNA using the four ribonucleoside triphosphates as substrates. This Cupriavidus necator (strain ATCC 17699 / DSM 428 / KCTC 22496 / NCIMB 10442 / H16 / Stanier 337) (Ralstonia eutropha) protein is DNA-directed RNA polymerase subunit beta'.